Consider the following 123-residue polypeptide: MPTIKQLIRNTRQPIRNVTKSPALRGCPQRRGTCTRVYTINPKKPNSALRKVARVRLTSGFEITAYIPGIGHNSQEHSVVLVRGGRVKDLPGVRYHIVRGTLDAVGVKDRQQGRSKYGVKRPK.

The protein belongs to the universal ribosomal protein uS12 family. As to quaternary structure, part of the 30S ribosomal subunit.

The protein resides in the plastid. Its subcellular location is the chloroplast. Its function is as follows. With S4 and S5 plays an important role in translational accuracy. Located at the interface of the 30S and 50S subunits. The protein is Small ribosomal subunit protein uS12c (rps12) of Oenothera elata subsp. hookeri (Hooker's evening primrose).